The following is a 585-amino-acid chain: Adenine deaminase (585 aa).

Belongs to the metallo-dependent hydrolases superfamily. Adenine deaminase family. Mn(2+) serves as cofactor.

It catalyses the reaction adenine + H2O + H(+) = hypoxanthine + NH4(+). The polypeptide is Adenine deaminase (Halalkalibacterium halodurans (strain ATCC BAA-125 / DSM 18197 / FERM 7344 / JCM 9153 / C-125) (Bacillus halodurans)).